Consider the following 528-residue polypeptide: Membrane protein insertase YidC (528 aa).

The next 4 helical transmembrane spans lie at 5–25 (VVIA…IFPP), 346–366 (YGIA…PLTH), 416–436 (LPMI…MFSI), and 486–506 (MLAL…GLVL).

Belongs to the OXA1/ALB3/YidC family. Type 1 subfamily. Interacts with the Sec translocase complex via SecD. Specifically interacts with transmembrane segments of nascent integral membrane proteins during membrane integration.

Its subcellular location is the cell inner membrane. Its function is as follows. Required for the insertion and/or proper folding and/or complex formation of integral membrane proteins into the membrane. Involved in integration of membrane proteins that insert both dependently and independently of the Sec translocase complex, as well as at least some lipoproteins. Aids folding of multispanning membrane proteins. The protein is Membrane protein insertase YidC of Geotalea uraniireducens (strain Rf4) (Geobacter uraniireducens).